We begin with the raw amino-acid sequence, 601 residues long: Molybdenum cofactor synthesis protein cinnamon (601 aa).

Residues 3–153 (SITFGVLTIS…TISALLPHAV (151 aa)) are MPT adenylyltransferase. Positions 173–195 (SAQKSHICPHKTGTGTDSDRNSP) are disordered. The MPT Mo-transferase stretch occupies residues 184–596 (TGTGTDSDRN…FPASVLRFDF (413 aa)). Ser376 is subject to Phosphoserine.

It in the N-terminal section; belongs to the MoaB/Mog family. The protein in the C-terminal section; belongs to the MoeA family. Requires Mg(2+) as cofactor.

It carries out the reaction molybdopterin + ATP + H(+) = adenylyl-molybdopterin + diphosphate. It catalyses the reaction adenylyl-molybdopterin + molybdate = Mo-molybdopterin + AMP + H(+). The protein operates within cofactor biosynthesis; molybdopterin biosynthesis. Functionally, catalyzes two steps in the biosynthesis of the molybdenum cofactor. In the first step, molybdopterin is adenylated. Subsequently, molybdate is inserted into adenylated molybdopterin and AMP is released. This chain is Molybdenum cofactor synthesis protein cinnamon (cin), found in Drosophila melanogaster (Fruit fly).